We begin with the raw amino-acid sequence, 164 residues long: uncharacterized protein (164 aa).

This is an uncharacterized protein from Arabidopsis thaliana (Mouse-ear cress).